A 411-amino-acid chain; its full sequence is Putative nickel insertion protein (411 aa).

It belongs to the LarC family.

The sequence is that of Putative nickel insertion protein from Acaryochloris marina (strain MBIC 11017).